The primary structure comprises 415 residues: Coiled-coil domain-containing glutamate-rich protein 1 (415 aa).

Over residues 1–11 (MTQTLDTKEDP) the composition is skewed to basic and acidic residues. 5 disordered regions span residues 1–20 (MTQTLDTKEDPLNLGGGWAS), 29–64 (FGPRRRRGAPVYRRRPRYGPKAEYEPPRKQAKQQYG), 133–162 (RPPGRKKRWGRRGRGLRRHPRRSAQRSPPV), 202–241 (QEKLERQQEALRAQQAQAASTASPEGAFGNDVPPSGGQED), and 255–372 (PSLV…PLEM). Composition is skewed to basic residues over residues 31–46 (PRRRRGAPVYRRRPRY) and 135–156 (PGRKKRWGRRGRGLRRHPRRSA). Coiled-coil stretches lie at residues 197–224 (EDMRQQEKLERQQEALRAQQAQAASTAS) and 264–366 (DEEK…EEEN). Residues 211–220 (ALRAQQAQAA) show a composition bias toward low complexity. Residues 275-363 (VEEEEEGERE…EGLAEDEQTE (89 aa)) are compositionally biased toward acidic residues.

The protein localises to the nucleus. In terms of biological role, regulator of histone epigenetic modifications and chromatin compaction into the sperm head, required for histone-to-protamine (HTP) transition. HTP is a key event in which somatic histones are first replaced by testis-specific histone variants, then transition proteins (TNPs) are incorporated into the spermatid nucleus, and finally protamines (PRMs) replace the TNPs to promote chromatin condensation. The protein is Coiled-coil domain-containing glutamate-rich protein 1 (CCER1) of Bos taurus (Bovine).